Here is a 160-residue protein sequence, read N- to C-terminus: Baculoviral IAP repeat-containing protein 5.1 (160 aa).

The BIR repeat unit spans residues 27–97 (RLATFADWPF…KRSASCGFLS (71 aa)). Thr43 bears the Phosphothreonine; by CDK1 mark. Zn(2+) is bound by residues Cys66, Cys69, His86, and Cys93.

It belongs to the IAP family. Component of the CPC at least composed of survivin/birc5, incenp, cdca8/borealin and/or cdca9/dasra-A, and aurkb/aurora-B. Interacts directly with incenp (via N-terminus), and may weakly interact with aurkb (via N-terminus) to stabilize the complex. Interacts with GTP-bound ran in both the S and M phases of the cell cycle. Also found in a complex with ubiquitin-mediated signaling proteins including at least usp9x/xFAM, nploc4/npl4 and ufd1. Post-translationally, ubiquitination is required for centrosome-targeting.

It localises to the cytoplasm. Its subcellular location is the nucleus. The protein localises to the chromosome. It is found in the centromere. The protein resides in the cytoskeleton. It localises to the spindle. In terms of biological role, component of the chromosomal passenger complex (CPC), a complex that acts as a key regulator of mitosis. The CPC complex has essential functions at the centromere in ensuring correct chromosome alignment and segregation and is required for chromatin-induced microtubule stabilization and spindle assembly. Stimulates the mitotic kinase activity of aurkb/aurora-B in the CPC. Does not appear to exhibit anti-apoptotic activity. This Xenopus tropicalis (Western clawed frog) protein is Baculoviral IAP repeat-containing protein 5.1 (birc5.1).